The chain runs to 1438 residues: Lysophospholipase NTE1 (1438 aa).

Topologically, residues 1–25 (MDSDTSSADFHSTETLVSTPKYSYG) are cytoplasmic. Residues 26–46 (VLINVILLVSWTCFRVVNWFL) traverse the membrane as a helical segment. Over 47–64 (VTLPSILLGMLSKTFQIT) the chain is Lumenal. The chain crosses the membrane as a helical span at residues 65 to 85 (LSLSSILMFVVAVTAICFLVV). Residues 86 to 1438 (RYKYLTRYSR…HVSLSRRNSI (1353 aa)) are Cytoplasmic-facing. The segment covering 432 to 450 (YETQTIPNESEDSPTIQRS) has biased composition (polar residues). The tract at residues 432–464 (YETQTIPNESEDSPTIQRSSLRRRASHSTSLRK) is disordered. A nucleoside 3',5'-cyclic phosphate-binding positions include 590-720 (GDDS…LTID) and 707-856 (RLKR…VANR). In terms of domain architecture, PNPLA spans 1131–1295 (LVLGGGGSRG…LDNLPVSEMK (165 aa)). Residues 1135 to 1140 (GGGSRG) carry the GXGXXG motif. The short motif at 1162-1166 (GTSIG) is the GXSXG element. Residue Ser-1164 is the Nucleophile of the active site. The active-site Proton acceptor is Asp-1282. Residues 1282–1284 (DGG) carry the DGA/G motif.

This sequence belongs to the NTE family.

The protein resides in the endoplasmic reticulum membrane. It carries out the reaction a 1-acyl-sn-glycero-3-phosphocholine + H2O = sn-glycerol 3-phosphocholine + a fatty acid + H(+). With respect to regulation, inhibited by organophosphorus esters. In terms of biological role, intracellular phospholipase B that catalyzes the double deacylation of phosphatidylcholine (PC) to glycerophosphocholine (GroPCho). Plays an important role in membrane lipid homeostasis. Responsible for the rapid PC turnover in response to inositol, elevated temperatures, or when choline is present in the growth medium. This Meyerozyma guilliermondii (strain ATCC 6260 / CBS 566 / DSM 6381 / JCM 1539 / NBRC 10279 / NRRL Y-324) (Yeast) protein is Lysophospholipase NTE1 (NTE1).